Consider the following 230-residue polypeptide: Ephrin-A3 (230 aa).

A signal peptide spans 1–22; the sequence is MAAAPLLLLLLLVPVPLLPLLA. One can recognise an Ephrin RBD domain in the interval 30–161; sequence GNRHAVYWNS…RMKVFVCCAS (132 aa). N38, N67, N84, and N92 each carry an N-linked (GlcNAc...) asparagine glycan. 2 disulfides stabilise this stretch: C63-C102 and C91-C150. The GPI-anchor amidated glycine moiety is linked to residue G206. Residues 207 to 230 constitute a propeptide, removed in mature form; it reads TSPKREHLPLAVGIAFFLMTLLAS.

The protein belongs to the ephrin family. As to quaternary structure, interacts with EPHA8; activates EPHA8. Expressed in myogenic progenitor cells.

Its subcellular location is the cell membrane. Its function is as follows. Cell surface GPI-bound ligand for Eph receptors, a family of receptor tyrosine kinases which are crucial for migration, repulsion and adhesion during neuronal, vascular and epithelial development. Binds promiscuously Eph receptors residing on adjacent cells, leading to contact-dependent bidirectional signaling into neighboring cells. The signaling pathway downstream of the receptor is referred to as forward signaling while the signaling pathway downstream of the ephrin ligand is referred to as reverse signaling. The sequence is that of Ephrin-A3 (Efna3) from Mus musculus (Mouse).